Reading from the N-terminus, the 556-residue chain is Potassium-transporting ATPase potassium-binding subunit (556 aa).

The next 12 helical transmembrane spans lie at 3-23 (AHGV…TPIL), 57-77 (AAYA…LYAL), 129-149 (GLTV…VALM), 172-192 (LGLL…QGVP), 247-267 (LVNL…TNTF), 278-298 (WALL…AWWA), 319-339 (LGVA…CGAV), 346-366 (LLPL…VVVG), 371-391 (GLYG…LMVG), 408-428 (LAVI…GLAI), 486-506 (FVVM…MAVP), and 516-536 (GWLF…LTYF).

The protein belongs to the KdpA family. In terms of assembly, the system is composed of three essential subunits: KdpA, KdpB and KdpC.

It localises to the cell inner membrane. Part of the high-affinity ATP-driven potassium transport (or Kdp) system, which catalyzes the hydrolysis of ATP coupled with the electrogenic transport of potassium into the cytoplasm. This subunit binds the periplasmic potassium ions and delivers the ions to the membrane domain of KdpB through an intramembrane tunnel. The polypeptide is Potassium-transporting ATPase potassium-binding subunit (Paramagnetospirillum magneticum (strain ATCC 700264 / AMB-1) (Magnetospirillum magneticum)).